Reading from the N-terminus, the 823-residue chain is MEEIEDKEPRQENEELKIPDVLPLLPVRDVVVYPYMILPLFVGREISINAVDQALSRDRLIFLATQKEMGDEEPTPEGMYTVGTVAMIMRMLKLPDGRVKVLVQGLAKGLITEFVESKPAYTVRIERIVEPSVPEESLETEALMRAVKEQLTQIVSLGKAVSPEVLVIVENMQEPGSLADLIASNIGLKVDDAQALLEIIDPVQRLQKVNEHLNKEHELLDMQVKIQSAAKEEMGKSQREYFLREQLRAIQQELGETDPRSEELNELRKAIEQAKMPPVVEKEAFKQLGRLEQMHPDAAEAGMLRTFLDWMVELPWGKATKDVLDIKRARQILDEDHFYLEKIKERILEFLAVRKLRKKMKGPILCFVGPPGVGKTSLGKSIARAMGRKFVRISLGGVRDEAEIRGHRRTYVGALPGRIIQGLKQAGSNNPVFMLDELDKLGADFRGDPSSALLEVLDPEQNHMFSDHYINLPFNLSNVMFIATANQIDTVPGPLRDRMEVIQLSGYTEEEKLEIAKRYLIPRQMKENGISEKEIVISDEAVRTIIAKYTREAGLRNLEREIGSVCRKVARKVAEGDGRRFRITPATVAKYLGPARFIREGEMEKNEVGIVTGLAWTPVGGEVLFVEATIMKGKGGLTLTGHLGDVMKESVQAALSYIRSKAKEFHLAEDFLSGYDIHVHVPAGAIPKDGPSAGVTMATALVSALTRVPVRKDVAMTGEITLRGKVLPIGGLKEKMLAAIRAGIKTIVIPEQNEKDLEEIPKHILKKVTVVSAKVIDDVLAVALETFPPPPPASEGKPAATVKAPPRRGIAAPRKGAMAGAKS.

In terms of domain architecture, Lon N-terminal spans 22–217 (LPLLPVRDVV…KVNEHLNKEH (196 aa)). Residue 369–376 (GPPGVGKT) coordinates ATP. In terms of domain architecture, Lon proteolytic spans 605 to 786 (KNEVGIVTGL…DDVLAVALET (182 aa)). Active-site residues include S692 and K735. Positions 788 to 823 (PPPPPASEGKPAATVKAPPRRGIAAPRKGAMAGAKS) are disordered.

It belongs to the peptidase S16 family. In terms of assembly, homohexamer. Organized in a ring with a central cavity.

It is found in the cytoplasm. The enzyme catalyses Hydrolysis of proteins in presence of ATP.. In terms of biological role, ATP-dependent serine protease that mediates the selective degradation of mutant and abnormal proteins as well as certain short-lived regulatory proteins. Required for cellular homeostasis and for survival from DNA damage and developmental changes induced by stress. Degrades polypeptides processively to yield small peptide fragments that are 5 to 10 amino acids long. Binds to DNA in a double-stranded, site-specific manner. The chain is Lon protease from Geobacter metallireducens (strain ATCC 53774 / DSM 7210 / GS-15).